A 1383-amino-acid chain; its full sequence is Insulin receptor (1383 aa).

The first 26 residues, 1-26, serve as a signal peptide directing secretion; the sequence is MGSGRGCETTAVPLLMAVAVAGGTAG. Extracellular-side segments run 27-759 and 764-957; these read HLYP…TRPS and SLEE…NIAK. Cysteines 34 and 52 form a disulfide. Asn-42, Asn-51, Asn-104, and Asn-137 each carry an N-linked (GlcNAc...) asparagine glycan. 9 disulfides stabilise this stretch: Cys-152-Cys-181, Cys-185-Cys-208, Cys-195-Cys-214, Cys-218-Cys-227, Cys-222-Cys-233, Cys-234-Cys-242, Cys-238-Cys-251, Cys-254-Cys-263, and Cys-267-Cys-279. N-linked (GlcNAc...) asparagine glycosylation is present at Asn-241. Residue Asn-281 is glycosylated (N-linked (GlcNAc...) asparagine). Intrachain disulfides connect Cys-285–Cys-310, Cys-292–Cys-300, Cys-314–Cys-327, Cys-330–Cys-334, and Cys-338–Cys-359. N-linked (GlcNAc...) asparagine glycosylation is present at Asn-321. N-linked (GlcNAc...) asparagine glycosylation is present at Asn-363. Ser-399 bears the Phosphoserine mark. Residue Tyr-400 is modified to Phosphotyrosine. Ser-406 carries the phosphoserine modification. Asn-423 and Asn-444 each carry an N-linked (GlcNAc...) asparagine glycan. A disulfide bond links Cys-461 and Cys-494. N-linked (GlcNAc...) asparagine glycosylation is found at Asn-540, Asn-634, Asn-652, and Asn-699. Residues 625–727 form the Fibronectin type-III 1 domain; that stretch reads VPLDPISVSN…SQILKELEES (103 aa). Residues Cys-675 and Cys-900 are joined by a disulfide bond. Positions 687 to 709 are disordered; sequence SPPFESDDSQKHNQSEYDDSASE. An insulin-binding region spans residues 734–742; sequence EDYLHNVVF. Residues 747-783 form a disordered region; the sequence is TSSGNGAEDTRPSRKRRSLEEVGNVTATTPTLPDFPN. Fibronectin type-III domains lie at 754–848 and 854–948; these read EDTR…TMPE and IVGP…VTDY. Asn-770, Asn-783, Asn-921, and Asn-934 each carry an N-linked (GlcNAc...) asparagine glycan. Residues 771–783 are compositionally biased toward polar residues; that stretch reads VTATTPTLPDFPN. A helical transmembrane segment spans residues 958 to 978; sequence IIIGPLIFVFLFSVVIGSIYL. The Cytoplasmic portion of the chain corresponds to 979–1383; sequence FLRKRQPDGP…VLTLPRSNPS (405 aa). An important for interaction with IRS1, SHC1 and STAT5B region spans residues 997 to 1000; it reads NPEY. Tyr-1000 is modified (phosphotyrosine; by autocatalysis). A Protein kinase domain is found at 1024-1299; the sequence is ITLLRELGQG…LLKDDLHPSF (276 aa). 2 residues coordinate ATP: Ser-1034 and Lys-1058. A Glycyl lysine isopeptide (Lys-Gly) (interchain with G-Cter in ubiquitin) cross-link involves residue Lys-1080. Cys-1084 carries the S-nitrosocysteine modification. 1105 to 1111 provides a ligand contact to ATP; it reads ELMAHGD. The Proton donor/acceptor role is filled by Asp-1160. Residues 1164–1165 and Asp-1178 contribute to the ATP site; that span reads RN. Tyr-1186, Tyr-1190, Tyr-1191, Tyr-1356, and Tyr-1362 each carry phosphotyrosine; by autocatalysis. Residues 1361–1383 form a disordered region; that stretch reads PYTHMNGGKKNGRVLTLPRSNPS. The interval 1362-1365 is PIK3R1 binding; the sequence is YTHM.

It belongs to the protein kinase superfamily. Tyr protein kinase family. Insulin receptor subfamily. As to quaternary structure, tetramer of 2 alpha and 2 beta chains linked by disulfide bonds. The alpha chains carry the insulin-binding regions, while the beta chains carry the kinase domain. Forms a hybrid receptor with IGF1R, the hybrid is a tetramer consisting of 1 alpha chain and 1 beta chain of INSR and 1 alpha chain and 1 beta chain of IGF1R. Interacts with SORBS1 but dissociates from it following insulin stimulation. Binds SH2B2. Activated form of INSR interacts (via Tyr-1000) with the PTB/PID domains of IRS1 and SHC1. The sequences surrounding the phosphorylated NPXY motif contribute differentially to either IRS1 or SHC1 recognition. Interacts (via tyrosines in the C-terminus) with IRS2 (via PTB domain and 591-786 AA); the 591-786 would be the primary anchor of IRS2 to INSR while the PTB domain would have a stabilizing action on the interaction with INSR. Interacts with the SH2 domains of the 85 kDa regulatory subunit of PI3K (PIK3R1) in vitro, when autophosphorylated on tyrosine residues. Interacts with SOCS7. Interacts (via the phosphorylated Tyr-1000), with SOCS3. Interacts (via the phosphorylated Tyr-1186, Tyr-1190, Tyr-1191) with SOCS1. Interacts with ARRB2. Interacts with GRB10; this interaction blocks the association between IRS1/IRS2 and INSR, significantly reduces insulin-stimulated tyrosine phosphorylation of IRS1 and IRS2 and thus decreases insulin signaling. Interacts with PDPK1. Interacts (via Tyr-1191) with GRB14 (via BPS domain); this interaction protects the tyrosines in the activation loop from dephosphorylation, but promotes dephosphorylation of Tyr-1000, this results in decreased interaction with, and phosphorylation of, IRS1. Interacts (via subunit alpha) with ENPP1 (via 485-599 AA); this interaction blocks autophosphorylation. Interacts with PTPRE; this interaction is dependent of Tyr-1186, Tyr-1190 and Tyr-1191 of the INSR. Interacts with STAT5B (via SH2 domain). Interacts with PTPRF. Interacts with GRB7. Interacts with CAV2 (tyrosine-phosphorylated form); the interaction is increased with 'Tyr-27'phosphorylation of CAV2. Interacts with ATIC; ATIC together with PRKAA2/AMPK2 and HACD3/PTPLAD1 is proposed to be part of a signaling netwok regulating INSR autophosphorylation and endocytosis. Interacts with the insulin receptor SORL1; this interaction strongly increases its surface exposure, hence strengthens insulin signal reception. Interacts (tyrosine phosphorylated) with CCDC88A/GIV (via SH2-like region); binding requires autophosphorylation of the Insr C-terminal region. Interacts with GNAI3; the interaction is probably mediated by CCDC88A/GIV. Interacts with LMBRD1. Interacts (in response to insulin stimulation) with NCK1; this interaction may recruit PTPN1 to mediate INSR dephosphorylation. Interacts with CD248; this interaction diminishes INSR autophosphorylation. In terms of processing, after being transported from the endoplasmic reticulum to the Golgi apparatus, the single glycosylated precursor is further glycosylated and then cleaved, followed by its transport to the plasma membrane. Post-translationally, autophosphorylated on tyrosine residues in response to insulin. Phosphorylation of Tyr-1000 is required for binding to IRS1, SHC1 and STAT5B. May also be phosphorylated at Tyr-1186 and Tyr-1191 by mTORC2. Dephosphorylated by PTPRE at Tyr-1000, Tyr-1186, Tyr-1190 and Tyr-1191. Dephosphorylated by PTPRF and PTPN1. Dephosphorylated by PTPN2; down-regulates insulin-induced signaling. S-nitrosylation at Cys-1084 by BLVRB inhibits the receptor tyrosine kinase, thereby inhibiting insulin signaling. In terms of processing, ubiquitinated by MARCHF1; leading to degradation thereby reducing surface INSR expression.

It is found in the cell membrane. Its subcellular location is the late endosome. The protein localises to the lysosome. The catalysed reaction is L-tyrosyl-[protein] + ATP = O-phospho-L-tyrosyl-[protein] + ADP + H(+). Activated in response to insulin. Autophosphorylation activates the kinase activity. PTPN1, PTPRE and PTPRF dephosphorylate important tyrosine residues, thereby reducing INSR activity. Inhibited by ENPP1. GRB10 and GRB14 inhibit the catalytic activity of the INSR, they block access of substrates to the activated receptor. SOCS1 and SOCS3 act as negative regulators of INSR activity, they bind to the activated INRS and interfere with the phosphorylation of INSR substrates. Functionally, receptor tyrosine kinase which mediates the pleiotropic actions of insulin. Binding of insulin leads to phosphorylation of several intracellular substrates, including, insulin receptor substrates (IRS1, 2, 3, 4), SHC, GAB1, CBL and other signaling intermediates. Each of these phosphorylated proteins serve as docking proteins for other signaling proteins that contain Src-homology-2 domains (SH2 domain) that specifically recognize different phosphotyrosine residues, including the p85 regulatory subunit of PI3K and SHP2. Phosphorylation of IRSs proteins lead to the activation of two main signaling pathways: the PI3K-AKT/PKB pathway, which is responsible for most of the metabolic actions of insulin, and the Ras-MAPK pathway, which regulates expression of some genes and cooperates with the PI3K pathway to control cell growth and differentiation. Binding of the SH2 domains of PI3K to phosphotyrosines on IRS1 leads to the activation of PI3K and the generation of phosphatidylinositol-(3, 4, 5)-triphosphate (PIP3), a lipid second messenger, which activates several PIP3-dependent serine/threonine kinases, such as PDPK1 and subsequently AKT/PKB. The net effect of this pathway is to produce a translocation of the glucose transporter SLC2A4/GLUT4 from cytoplasmic vesicles to the cell membrane to facilitate glucose transport. Moreover, upon insulin stimulation, activated AKT/PKB is responsible for: anti-apoptotic effect of insulin by inducing phosphorylation of BAD; regulates the expression of gluconeogenic and lipogenic enzymes by controlling the activity of the winged helix or forkhead (FOX) class of transcription factors. Another pathway regulated by PI3K-AKT/PKB activation is mTORC1 signaling pathway which regulates cell growth and metabolism and integrates signals from insulin. AKT mediates insulin-stimulated protein synthesis by phosphorylating TSC2 thereby activating mTORC1 pathway. The Ras/RAF/MAP2K/MAPK pathway is mainly involved in mediating cell growth, survival and cellular differentiation of insulin. Phosphorylated IRS1 recruits GRB2/SOS complex, which triggers the activation of the Ras/RAF/MAP2K/MAPK pathway. In addition to binding insulin, the insulin receptor can bind insulin-like growth factors (IGFI and IGFII). When present in a hybrid receptor with IGF1R, binds IGF1. In adipocytes, inhibits lipolysis. This is Insulin receptor (Insr) from Rattus norvegicus (Rat).